We begin with the raw amino-acid sequence, 259 residues long: Global transcriptional regulator CodY (259 aa).

The interval 1–155 (MDLLSRARKI…GATVVGMEIL (155 aa)) is GAF domain. The segment at residues 203–222 (ASKIADRVGITRSVIVNALR) is a DNA-binding region (H-T-H motif). Ser215 is subject to Phosphoserine.

The protein belongs to the CodY family.

The protein resides in the cytoplasm. Its function is as follows. DNA-binding global transcriptional regulator which is involved in the adaptive response to starvation and acts by directly or indirectly controlling the expression of numerous genes in response to nutrient availability. During rapid exponential growth, CodY is highly active and represses genes whose products allow adaptation to nutrient depletion. The sequence is that of Global transcriptional regulator CodY from Oceanobacillus iheyensis (strain DSM 14371 / CIP 107618 / JCM 11309 / KCTC 3954 / HTE831).